Here is a 203-residue protein sequence, read N- to C-terminus: Cytochrome c oxidase assembly protein CtaG (203 aa).

The Cytoplasmic portion of the chain corresponds to 1–16; the sequence is MADQQEKDQKLKKQQR. A helical; Signal-anchor for type II membrane protein transmembrane segment spans residues 17-39; sequence SNATIAFACLSFFVCMIGAAYAS. The Periplasmic segment spans residues 40-203; that stretch reads VPLYRIFCQV…VKAETPTNGS (164 aa).

It belongs to the COX11/CtaG family.

It localises to the cell inner membrane. Functionally, exerts its effect at some terminal stage of cytochrome c oxidase synthesis, probably by being involved in the insertion of the copper B into subunit I. This chain is Cytochrome c oxidase assembly protein CtaG, found in Brucella anthropi (strain ATCC 49188 / DSM 6882 / CCUG 24695 / JCM 21032 / LMG 3331 / NBRC 15819 / NCTC 12168 / Alc 37) (Ochrobactrum anthropi).